A 322-amino-acid polypeptide reads, in one-letter code: Phosphatidylserine decarboxylase proenzyme (322 aa).

Catalysis depends on charge relay system; for autoendoproteolytic cleavage activity residues aspartate 90, histidine 147, and serine 254. Catalysis depends on serine 254, which acts as the Schiff-base intermediate with substrate; via pyruvic acid; for decarboxylase activity. Serine 254 is modified (pyruvic acid (Ser); by autocatalysis). A disordered region spans residues 294–322 (EAEPAPLPEEEINAEHDASPLVDDKKDES). The span at 306–322 (NAEHDASPLVDDKKDES) shows a compositional bias: basic and acidic residues.

It belongs to the phosphatidylserine decarboxylase family. PSD-B subfamily. Prokaryotic type I sub-subfamily. As to quaternary structure, heterodimer of a large membrane-associated beta subunit and a small pyruvoyl-containing alpha subunit. Pyruvate is required as a cofactor. Post-translationally, is synthesized initially as an inactive proenzyme. Formation of the active enzyme involves a self-maturation process in which the active site pyruvoyl group is generated from an internal serine residue via an autocatalytic post-translational modification. Two non-identical subunits are generated from the proenzyme in this reaction, and the pyruvate is formed at the N-terminus of the alpha chain, which is derived from the carboxyl end of the proenzyme. The autoendoproteolytic cleavage occurs by a canonical serine protease mechanism, in which the side chain hydroxyl group of the serine supplies its oxygen atom to form the C-terminus of the beta chain, while the remainder of the serine residue undergoes an oxidative deamination to produce ammonia and the pyruvoyl prosthetic group on the alpha chain. During this reaction, the Ser that is part of the protease active site of the proenzyme becomes the pyruvoyl prosthetic group, which constitutes an essential element of the active site of the mature decarboxylase.

It localises to the cell membrane. It catalyses the reaction a 1,2-diacyl-sn-glycero-3-phospho-L-serine + H(+) = a 1,2-diacyl-sn-glycero-3-phosphoethanolamine + CO2. It participates in phospholipid metabolism; phosphatidylethanolamine biosynthesis; phosphatidylethanolamine from CDP-diacylglycerol: step 2/2. Its function is as follows. Catalyzes the formation of phosphatidylethanolamine (PtdEtn) from phosphatidylserine (PtdSer). This chain is Phosphatidylserine decarboxylase proenzyme, found in Citrobacter koseri (strain ATCC BAA-895 / CDC 4225-83 / SGSC4696).